We begin with the raw amino-acid sequence, 249 residues long: 1-(5-phosphoribosyl)-5-[(5-phosphoribosylamino)methylideneamino] imidazole-4-carboxamide isomerase (249 aa).

Aspartate 8 serves as the catalytic Proton acceptor. Residue aspartate 131 is the Proton donor of the active site.

The protein belongs to the HisA/HisF family.

It is found in the cytoplasm. The enzyme catalyses 1-(5-phospho-beta-D-ribosyl)-5-[(5-phospho-beta-D-ribosylamino)methylideneamino]imidazole-4-carboxamide = 5-[(5-phospho-1-deoxy-D-ribulos-1-ylimino)methylamino]-1-(5-phospho-beta-D-ribosyl)imidazole-4-carboxamide. Its pathway is amino-acid biosynthesis; L-histidine biosynthesis; L-histidine from 5-phospho-alpha-D-ribose 1-diphosphate: step 4/9. In Leptothrix cholodnii (strain ATCC 51168 / LMG 8142 / SP-6) (Leptothrix discophora (strain SP-6)), this protein is 1-(5-phosphoribosyl)-5-[(5-phosphoribosylamino)methylideneamino] imidazole-4-carboxamide isomerase.